The following is a 370-amino-acid chain: Forkhead box protein J1.2 (370 aa).

Positions 45 to 74 (ANSRPPVPRVSQGPCSPPAGDTASCQAPRT) are disordered. Positions 108–202 (KPPYSYATLI…VNGVLKRRRM (95 aa)) form a DNA-binding region, fork-head. Residues 227–246 (PGSHHMQHISGGHRQSRRYE) are disordered.

This sequence belongs to the FOXJ1 family.

It localises to the nucleus. Key transcription factor required for motile ciliogenesis. Activates genes essential for motile cilia formation and function. The chain is Forkhead box protein J1.2 from Xenopus laevis (African clawed frog).